Here is a 195-residue protein sequence, read N- to C-terminus: Probable molybdenum cofactor guanylyltransferase (195 aa).

GTP-binding positions include 8-10 (LSG), lysine 20, aspartate 65, and aspartate 96. Aspartate 96 serves as a coordination point for Mg(2+).

Belongs to the MobA family. Mg(2+) is required as a cofactor.

The protein resides in the cytoplasm. The catalysed reaction is Mo-molybdopterin + GTP + H(+) = Mo-molybdopterin guanine dinucleotide + diphosphate. Its function is as follows. Transfers a GMP moiety from GTP to Mo-molybdopterin (Mo-MPT) cofactor (Moco or molybdenum cofactor) to form Mo-molybdopterin guanine dinucleotide (Mo-MGD) cofactor. This Bacillus licheniformis (strain ATCC 14580 / DSM 13 / JCM 2505 / CCUG 7422 / NBRC 12200 / NCIMB 9375 / NCTC 10341 / NRRL NRS-1264 / Gibson 46) protein is Probable molybdenum cofactor guanylyltransferase.